The primary structure comprises 437 residues: Adenylosuccinate synthetase (437 aa).

GTP contacts are provided by residues 12–18 (GDEGKGK) and 40–42 (GHT). The active-site Proton acceptor is the Asp-13. Mg(2+) contacts are provided by Asp-13 and Gly-40. IMP-binding positions include 13 to 16 (DEGK), 38 to 41 (NAGH), Thr-128, Arg-142, Gln-223, Thr-238, and Arg-302. Residue His-41 is the Proton donor of the active site. 298–304 (TTTGRRR) contributes to the substrate binding site. GTP contacts are provided by residues Arg-304, 330–332 (KLD), and 412–414 (SLG).

Belongs to the adenylosuccinate synthetase family. As to quaternary structure, homodimer. Mg(2+) is required as a cofactor.

The protein resides in the cytoplasm. It catalyses the reaction IMP + L-aspartate + GTP = N(6)-(1,2-dicarboxyethyl)-AMP + GDP + phosphate + 2 H(+). The protein operates within purine metabolism; AMP biosynthesis via de novo pathway; AMP from IMP: step 1/2. In terms of biological role, plays an important role in the de novo pathway of purine nucleotide biosynthesis. Catalyzes the first committed step in the biosynthesis of AMP from IMP. The polypeptide is Adenylosuccinate synthetase (Prochlorococcus marinus (strain MIT 9211)).